The following is a 1775-amino-acid chain: ATP-dependent RNA helicase DEAH12, chloroplastic (1775 aa).

The N-terminal 33 residues, 1-33, are a transit peptide targeting the chloroplast; it reads MRNSFPPSDGGRSATDRRQQSSHSSSTNRYNSR. A disordered region spans residues 1-77; it reads MRNSFPPSDG…NPSSGYSPPV (77 aa). Residues 21–34 show a composition bias toward low complexity; it reads SSHSSSTNRYNSRS. The span at 35–60 shows a compositional bias: polar residues; it reads AQSSPPLNHRPTWNQQHSQYPNSNFP. The Helicase ATP-binding domain occupies 316-480; it reads LKKIHREQIM…FFSCGILLVN (165 aa). 329–336 lines the ATP pocket; it reads GETGSGKS. Positions 427–430 match the DEAH box motif; sequence DEAH. Residues 510–676 form the Helicase C-terminal domain; it reads DVVKMAVEIH…VALLRMLALG (167 aa). Positions 1560 to 1767 are TRIAD supradomain; it reads IEVECPICLS…EPCYAHLRTI (208 aa). 18 residues coordinate Zn(2+): C1564, C1567, C1580, H1582, C1585, C1588, C1607, C1612, C1652, C1657, C1675, C1678, C1683, C1686, H1691, C1696, C1722, and C1725. An RING-type 1 zinc finger spans residues 1564–1612; it reads CPICLSEVDDGYSLEGCSHLFCKACLLEQFEASMRNFDAFPILCSHIDC. Residues 1631–1696 form an IBR-type zinc finger; that stretch reads DELFSASLSS…HLEYHPLITC (66 aa). Residues 1722-1750 form an RING-type 2; atypical zinc finger; that stretch reads CPICKSTIEKTDGCNHMKCRCGKHICWTC. The active site involves C1735. Residues C1740 and C1742 each coordinate Zn(2+).

It belongs to the DEAD box helicase family. DEAH subfamily.

It localises to the plastid. The protein localises to the chloroplast. It catalyses the reaction ATP + H2O = ADP + phosphate + H(+). The chain is ATP-dependent RNA helicase DEAH12, chloroplastic from Arabidopsis thaliana (Mouse-ear cress).